We begin with the raw amino-acid sequence, 874 residues long: Leucine--tRNA ligase (874 aa).

The 'HIGH' region signature appears at 43 to 53 (PYPSGRIHIGH). Residues 630-634 (KMSKS) carry the 'KMSKS' region motif. K633 is an ATP binding site.

This sequence belongs to the class-I aminoacyl-tRNA synthetase family.

Its subcellular location is the cytoplasm. It carries out the reaction tRNA(Leu) + L-leucine + ATP = L-leucyl-tRNA(Leu) + AMP + diphosphate. This is Leucine--tRNA ligase from Bradyrhizobium sp. (strain ORS 278).